The following is a 346-amino-acid chain: Protein RecA (346 aa).

Residue 65-72 (GPESSGKT) coordinates ATP.

The protein belongs to the RecA family.

It is found in the cytoplasm. Its function is as follows. Can catalyze the hydrolysis of ATP in the presence of single-stranded DNA, the ATP-dependent uptake of single-stranded DNA by duplex DNA, and the ATP-dependent hybridization of homologous single-stranded DNAs. It interacts with LexA causing its activation and leading to its autocatalytic cleavage. The sequence is that of Protein RecA from Pseudomonas aeruginosa (strain UCBPP-PA14).